A 356-amino-acid chain; its full sequence is Phospho-N-acetylmuramoyl-pentapeptide-transferase (356 aa).

The next 10 helical transmembrane spans lie at Gln-3–Ile-23, Thr-51–Ile-71, Gly-80–Ile-100, Ala-114–Pro-134, Phe-152–Met-172, Leu-185–Phe-205, Pro-227–Trp-247, Ile-254–Leu-274, Phe-279–Val-299, and Phe-333–Ala-353.

Belongs to the glycosyltransferase 4 family. MraY subfamily. The cofactor is Mg(2+).

It localises to the cell membrane. The catalysed reaction is UDP-N-acetyl-alpha-D-muramoyl-L-alanyl-gamma-D-glutamyl-meso-2,6-diaminopimeloyl-D-alanyl-D-alanine + di-trans,octa-cis-undecaprenyl phosphate = di-trans,octa-cis-undecaprenyl diphospho-N-acetyl-alpha-D-muramoyl-L-alanyl-D-glutamyl-meso-2,6-diaminopimeloyl-D-alanyl-D-alanine + UMP. It functions in the pathway cell wall biogenesis; peptidoglycan biosynthesis. Catalyzes the initial step of the lipid cycle reactions in the biosynthesis of the cell wall peptidoglycan: transfers peptidoglycan precursor phospho-MurNAc-pentapeptide from UDP-MurNAc-pentapeptide onto the lipid carrier undecaprenyl phosphate, yielding undecaprenyl-pyrophosphoryl-MurNAc-pentapeptide, known as lipid I. This chain is Phospho-N-acetylmuramoyl-pentapeptide-transferase, found in Streptomyces griseus subsp. griseus (strain JCM 4626 / CBS 651.72 / NBRC 13350 / KCC S-0626 / ISP 5235).